The primary structure comprises 149 residues: Large ribosomal subunit protein bL9 (149 aa).

Belongs to the bacterial ribosomal protein bL9 family.

Functionally, binds to the 23S rRNA. The chain is Large ribosomal subunit protein bL9 from Citrobacter koseri (strain ATCC BAA-895 / CDC 4225-83 / SGSC4696).